The following is a 174-amino-acid chain: Transcription antitermination protein NusB (174 aa).

Over residues 1–11 (MSEVETTNDQT) the composition is skewed to polar residues. Residues 1-29 (MSEVETTNDQTPAPKRKDKKPSRSQLRSA) are disordered.

It belongs to the NusB family.

Functionally, involved in transcription antitermination. Required for transcription of ribosomal RNA (rRNA) genes. Binds specifically to the boxA antiterminator sequence of the ribosomal RNA (rrn) operons. The sequence is that of Transcription antitermination protein NusB from Marinomonas sp. (strain MWYL1).